Here is a 1526-residue protein sequence, read N- to C-terminus: Myosin type-2 heavy chain 1 (1526 aa).

One can recognise a Myosin N-terminal SH3-like domain in the interval D22–P73. In terms of domain architecture, Myosin motor spans D77–V755. Residue G170 to T177 participates in ATP binding. 2 actin-binding regions span residues L634–E656 and R734–A748. An IQ domain is found at L758–A787. Positions A875–S1244 form a coiled coil. Residue S1044 is modified to Phosphoserine.

Belongs to the TRAFAC class myosin-kinesin ATPase superfamily. Myosin family. As to quaternary structure, binds to cdc4 and rlc1.

Required for cell division. It is a component of the cdc12 'spot', a structure thought to mark the site of septation. May work in conjunction with myo3. This is Myosin type-2 heavy chain 1 (myo2) from Schizosaccharomyces pombe (strain 972 / ATCC 24843) (Fission yeast).